A 238-amino-acid chain; its full sequence is Protein LicA homolog (238 aa).

This sequence belongs to the peptidase S49 family.

This chain is Protein LicA homolog (licA), found in Mycoplasma capricolum subsp. capricolum (strain California kid / ATCC 27343 / NCTC 10154).